The primary structure comprises 353 residues: O-antigen biosynthesis glycosyltransferase WclY (353 aa).

A helical transmembrane segment spans residues 116-136; it reads SLIGGLLWCSIWLFFDKLVIL. Residues asparagine 190 and glutamate 271 each coordinate UDP. An E(x7)E motif is present at residues 263–271; that stretch reads EGFGLTVLE.

This sequence belongs to the glycosyltransferase group 1 family. Glycosyltransferase 4 subfamily.

It is found in the membrane. It functions in the pathway bacterial outer membrane biogenesis; LPS O-antigen biosynthesis. Its activity is regulated as follows. Activated by 5mM MnCl(2) and MgCl(2). No significant effect on activity by 5 mM ethylenediaminetetraacetic acid (EDTA), 0.125-0.5% Triton X-100 or dithiothreitol (DTT). Inhibited by 5 mM Zn-acetate. Its function is as follows. Involved in the assembly of the O-repeating unit during O-antigen biosynthesis. Glucosyltransferase accountable for the alpha-D-Glc-1,4-beta-D-Gal linkage within the O-antigen. Transfers alpha-1,4-Glc to the Gal moiety of a specific Gal-beta1-3GalNAc-alpha-OPO3-PO3-phenoxyundecyl (Gal-beta1-3GalNAc-PP-PhU) synthetic natural acceptor substrate analog. Requires both Gal-beta1-3GalNAc-alpha and the diphosphate moiety in the acceptor. Not active with GalNAc-PP-PhU, GlcNAc-PP-PhU, Gal-beta1-3GalNAc-alpha-O-benzyl, D-Rha-alpha1-3GlcNAc-alpha-PP-PhU or D-Man-alpha1-3Man-alpha-5-benzamidopentyl (BAP), nor with glycopeptides TTTVTP (Gal-beta1-3GalNAc-alpha-)TPTG or TT (Gal-beta1-3GalNAc-alpha-)TVTPTPTG as acceptor substrates. Has a broad nucleotide sugar donor substrate specificity with ADP-Glc, TDP-Glc and UDP-Glc as superior donors. Gal, GlcNAc, and GalNAc residues are transferred from UDP-sugars, but with low activity. UDP-Xyl, UDP-GlcA, GDP-Fuc or GDP-K-Rha do not act as donors. The sequence is that of O-antigen biosynthesis glycosyltransferase WclY from Escherichia coli.